Consider the following 430-residue polypeptide: Lipoyl synthase, mitochondrial (430 aa).

The transit peptide at 1–29 (MASPVPIQRLQAPLRRSLARAAALSTRSY) directs the protein to the mitochondrion. Over residues 28–58 (SYATIPSGPSSQPTSQESSSAASASAPATKP) the composition is skewed to low complexity. Residues 28-62 (SYATIPSGPSSQPTSQESSSAASASAPATKPRPTY) form a disordered region. The [4Fe-4S] cluster site is built by Cys-142, Cys-147, Cys-153, Cys-173, Cys-177, Cys-180, and Ser-390. Residues 156 to 379 (GSNKAAATAT…RQRALDMGFL (224 aa)) enclose the Radical SAM core domain.

Belongs to the radical SAM superfamily. Lipoyl synthase family. Requires [4Fe-4S] cluster as cofactor.

The protein resides in the mitochondrion. The enzyme catalyses [[Fe-S] cluster scaffold protein carrying a second [4Fe-4S](2+) cluster] + N(6)-octanoyl-L-lysyl-[protein] + 2 oxidized [2Fe-2S]-[ferredoxin] + 2 S-adenosyl-L-methionine + 4 H(+) = [[Fe-S] cluster scaffold protein] + N(6)-[(R)-dihydrolipoyl]-L-lysyl-[protein] + 4 Fe(3+) + 2 hydrogen sulfide + 2 5'-deoxyadenosine + 2 L-methionine + 2 reduced [2Fe-2S]-[ferredoxin]. Its pathway is protein modification; protein lipoylation via endogenous pathway; protein N(6)-(lipoyl)lysine from octanoyl-[acyl-carrier-protein]: step 2/2. In terms of biological role, catalyzes the radical-mediated insertion of two sulfur atoms into the C-6 and C-8 positions of the octanoyl moiety bound to the lipoyl domains of lipoate-dependent enzymes, thereby converting the octanoylated domains into lipoylated derivatives. The chain is Lipoyl synthase, mitochondrial from Neurospora crassa (strain ATCC 24698 / 74-OR23-1A / CBS 708.71 / DSM 1257 / FGSC 987).